Here is a 78-residue protein sequence, read N- to C-terminus: MQVLVRDNNVDQALRVLKKKMQREGLFREMKARSAYEKPSEKRAREKGEAVRRQRKLARKKLQREGLLPAPKKAVRAR.

Over residues 30–52 (MKARSAYEKPSEKRAREKGEAVR) the composition is skewed to basic and acidic residues. The disordered stretch occupies residues 30–78 (MKARSAYEKPSEKRAREKGEAVRRQRKLARKKLQREGLLPAPKKAVRAR). A compositionally biased stretch (basic residues) spans 53–62 (RQRKLARKKL).

This sequence belongs to the bacterial ribosomal protein bS21 family.

The polypeptide is Small ribosomal subunit protein bS21A (Rhizobium etli (strain ATCC 51251 / DSM 11541 / JCM 21823 / NBRC 15573 / CFN 42)).